A 269-amino-acid chain; its full sequence is Formamidopyrimidine-DNA glycosylase (269 aa).

The active-site Schiff-base intermediate with DNA is Pro-2. The Proton donor role is filled by Glu-3. Residue Lys-57 is the Proton donor; for beta-elimination activity of the active site. The DNA site is built by His-90, Arg-109, and Lys-150. The FPG-type zinc finger occupies 235 to 269 (RVYGRNGEPCRTCGTPIETAKHGQRSTFFCRRCQK). Arg-259 serves as the catalytic Proton donor; for delta-elimination activity.

This sequence belongs to the FPG family. In terms of assembly, monomer. It depends on Zn(2+) as a cofactor.

It carries out the reaction Hydrolysis of DNA containing ring-opened 7-methylguanine residues, releasing 2,6-diamino-4-hydroxy-5-(N-methyl)formamidopyrimidine.. The enzyme catalyses 2'-deoxyribonucleotide-(2'-deoxyribose 5'-phosphate)-2'-deoxyribonucleotide-DNA = a 3'-end 2'-deoxyribonucleotide-(2,3-dehydro-2,3-deoxyribose 5'-phosphate)-DNA + a 5'-end 5'-phospho-2'-deoxyribonucleoside-DNA + H(+). Involved in base excision repair of DNA damaged by oxidation or by mutagenic agents. Acts as a DNA glycosylase that recognizes and removes damaged bases. Has a preference for oxidized purines, such as 7,8-dihydro-8-oxoguanine (8-oxoG). Has AP (apurinic/apyrimidinic) lyase activity and introduces nicks in the DNA strand. Cleaves the DNA backbone by beta-delta elimination to generate a single-strand break at the site of the removed base with both 3'- and 5'-phosphates. This is Formamidopyrimidine-DNA glycosylase from Pectobacterium carotovorum subsp. carotovorum (strain PC1).